A 535-amino-acid chain; its full sequence is Phosphoenolpyruvate carboxykinase (ATP) (535 aa).

Residues R59, Y201, and K207 each coordinate substrate. ATP contacts are provided by residues K207, H226, and 243–251 (GLSGTGKTT). Residues K207 and H226 each contribute to the Mn(2+) site. D264 provides a ligand contact to Mn(2+). ATP is bound by residues E292, R328, 444–445 (RI), and T450. Residue R328 participates in substrate binding.

Belongs to the phosphoenolpyruvate carboxykinase (ATP) family. Mn(2+) serves as cofactor.

The protein localises to the cytoplasm. The enzyme catalyses oxaloacetate + ATP = phosphoenolpyruvate + ADP + CO2. It participates in carbohydrate biosynthesis; gluconeogenesis. Involved in the gluconeogenesis. Catalyzes the conversion of oxaloacetate (OAA) to phosphoenolpyruvate (PEP) through direct phosphoryl transfer between the nucleoside triphosphate and OAA. This Porphyromonas gingivalis (strain ATCC BAA-308 / W83) protein is Phosphoenolpyruvate carboxykinase (ATP).